We begin with the raw amino-acid sequence, 715 residues long: ABC transporter F family member 3 (715 aa).

Thr2 carries the post-translational modification N-acetylthreonine. Residues 96–118 (VRMNDGMDDGPVKKKKPEPVDGP) form a disordered region. 2 consecutive ABC transporter domains span residues 175–436 (IHMD…KNQQ) and 504–713 (ISFS…LLQS). ATP-binding positions include 207–214 (GRNGTGKT) and 537–544 (GPNGIGKS).

This sequence belongs to the ABC transporter superfamily. ABCF family. EF3 (TC 3.A.1.121) subfamily.

This Arabidopsis thaliana (Mouse-ear cress) protein is ABC transporter F family member 3 (ABCF3).